The following is a 427-amino-acid chain: Dihydroorotase (427 aa).

The Zn(2+) site is built by His-60 and His-62. Substrate contacts are provided by residues 62-64 (HLR) and Asn-94. Zn(2+) is bound by residues Asp-152, His-179, and His-232. Asn-278 serves as a coordination point for substrate. A Zn(2+)-binding site is contributed by Asp-305. Residue Asp-305 is part of the active site. Residues His-309 and 323–324 (FG) contribute to the substrate site.

This sequence belongs to the metallo-dependent hydrolases superfamily. DHOase family. Class I DHOase subfamily. Requires Zn(2+) as cofactor.

It catalyses the reaction (S)-dihydroorotate + H2O = N-carbamoyl-L-aspartate + H(+). It participates in pyrimidine metabolism; UMP biosynthesis via de novo pathway; (S)-dihydroorotate from bicarbonate: step 3/3. In terms of biological role, catalyzes the reversible cyclization of carbamoyl aspartate to dihydroorotate. This Geobacillus sp. (strain WCH70) protein is Dihydroorotase.